The chain runs to 810 residues: Abnormal pharyngeal pumping eat-20 (810 aa).

An N-terminal signal peptide occupies residues 1–20 (MTTFCRVLLIFGIYVAVCCA). The Extracellular portion of the chain corresponds to 21–748 (QSVEDDVFHF…GKQSSAAASW (728 aa)). N-linked (GlcNAc...) asparagine glycosylation is found at Asn-90, Asn-171, and Asn-232. 3 EGF-like domains span residues 220–257 (PPSPCANHECHNNGTCLVSQEGAATCLCRNGFTGDRCE), 258–293 (LDVCSSVPCQNGGVCRSNNGIAYCECPPAFTGLLCE), and 301–335 (VAPICRPECSNGQCVFKDGQAQCECRQGFTGANCN). 9 cysteine pairs are disulfide-bonded: Cys-224–Cys-235, Cys-229–Cys-245, Cys-247–Cys-256, Cys-261–Cys-272, Cys-266–Cys-281, Cys-283–Cys-292, Cys-305–Cys-314, Cys-309–Cys-323, and Cys-325–Cys-334. The N-linked (GlcNAc...) asparagine glycan is linked to Asn-371. The segment covering 522 to 531 (FAPTTGTQQP) has biased composition (low complexity). Disordered stretches follow at residues 522 to 567 (FAPT…STMQ) and 684 to 738 (PHPQ…HTSS). Residues 542–558 (DENEEEEEEETTEETEE) show a composition bias toward acidic residues. A helical membrane pass occupies residues 749-769 (IIAIIALIVLGLLLLATSLFI). The Cytoplasmic segment spans residues 770–810 (LRYIRQSRKLHGKYNPAREEHNLSAAYAMPMSHIAKEERLI).

As to expression, highly expressed in the pharynx, circumpharyngeal cells, pharyngeal-intestinal valve and a subset of neurons in larval and embryonic stages. Also moderately expressed in the lining of the intestine, coelomocytes, labial process bundles and some hypodermal cells. In adults, it is predominantly expressed in the pharynx, the pharyngeal-intenstinal valve, some circumpharyngeal cells, m3, m4 and m6 pharyngeal muscles, and IL1, OLQ, BAG and ALN neurons. Weaker expression is observed in labial process bundles, coelomocytes, the ventral hypodermal ridge, the vulval hypodermis and the sensory rays of the adult male tail.

It localises to the membrane. Functionally, regulates pharyngeal pumping during feeding. The protein is Abnormal pharyngeal pumping eat-20 (eat-20) of Caenorhabditis elegans.